Consider the following 214-residue polypeptide: Pyridoxine/pyridoxamine 5'-phosphate oxidase (214 aa).

Residues 8-11 (RTNY) and K66 each bind substrate. FMN is bound by residues 61 to 66 (RIVLIK), 76 to 77 (FT), R82, K83, and Q105. Residues Y123, R127, and S131 each coordinate substrate. FMN is bound by residues 140–141 (QS) and W184. Position 190–192 (190–192 (RLH)) interacts with substrate. Residue R194 participates in FMN binding.

The protein belongs to the pyridoxamine 5'-phosphate oxidase family. In terms of assembly, homodimer. FMN serves as cofactor.

It carries out the reaction pyridoxamine 5'-phosphate + O2 + H2O = pyridoxal 5'-phosphate + H2O2 + NH4(+). The enzyme catalyses pyridoxine 5'-phosphate + O2 = pyridoxal 5'-phosphate + H2O2. It functions in the pathway cofactor metabolism; pyridoxal 5'-phosphate salvage; pyridoxal 5'-phosphate from pyridoxamine 5'-phosphate: step 1/1. It participates in cofactor metabolism; pyridoxal 5'-phosphate salvage; pyridoxal 5'-phosphate from pyridoxine 5'-phosphate: step 1/1. Its function is as follows. Catalyzes the oxidation of either pyridoxine 5'-phosphate (PNP) or pyridoxamine 5'-phosphate (PMP) into pyridoxal 5'-phosphate (PLP). In Burkholderia thailandensis (strain ATCC 700388 / DSM 13276 / CCUG 48851 / CIP 106301 / E264), this protein is Pyridoxine/pyridoxamine 5'-phosphate oxidase.